The primary structure comprises 664 residues: Transketolase 1 (664 aa).

His-26 is a binding site for substrate. Thiamine diphosphate is bound by residues His-66 and 114 to 116 (GPL). Residue Asp-155 participates in Mg(2+) binding. Thiamine diphosphate is bound by residues Gly-156 and Asn-185. Mg(2+)-binding residues include Asn-185 and Ile-187. Residues His-260, Arg-357, and Ser-384 each contribute to the substrate site. His-260 is a binding site for thiamine diphosphate. Residue Glu-411 is the Proton donor of the active site. Phe-437 lines the thiamine diphosphate pocket. The substrate site is built by His-461, Asp-469, and Arg-520.

This sequence belongs to the transketolase family. In terms of assembly, homodimer. Mg(2+) is required as a cofactor. The cofactor is Ca(2+). It depends on Mn(2+) as a cofactor. Co(2+) serves as cofactor. Requires thiamine diphosphate as cofactor.

It catalyses the reaction D-sedoheptulose 7-phosphate + D-glyceraldehyde 3-phosphate = aldehydo-D-ribose 5-phosphate + D-xylulose 5-phosphate. Functionally, catalyzes the transfer of a two-carbon ketol group from a ketose donor to an aldose acceptor, via a covalent intermediate with the cofactor thiamine pyrophosphate. In Vibrio vulnificus (strain YJ016), this protein is Transketolase 1 (tkt1).